We begin with the raw amino-acid sequence, 334 residues long: N-acetyl-gamma-glutamyl-phosphate reductase (334 aa).

Cysteine 154 is a catalytic residue.

The protein belongs to the NAGSA dehydrogenase family. Type 1 subfamily.

It is found in the cytoplasm. The catalysed reaction is N-acetyl-L-glutamate 5-semialdehyde + phosphate + NADP(+) = N-acetyl-L-glutamyl 5-phosphate + NADPH + H(+). Its pathway is amino-acid biosynthesis; L-arginine biosynthesis; N(2)-acetyl-L-ornithine from L-glutamate: step 3/4. Functionally, catalyzes the NADPH-dependent reduction of N-acetyl-5-glutamyl phosphate to yield N-acetyl-L-glutamate 5-semialdehyde. This Shigella flexneri protein is N-acetyl-gamma-glutamyl-phosphate reductase.